Reading from the N-terminus, the 399-residue chain is Lipoyl synthase, mitochondrial (399 aa).

The transit peptide at 1–14 (MALISRSCGAASRY) directs the protein to the mitochondrion. The span at 39-52 (AASTSSSSSPSPST) shows a compositional bias: low complexity. Residues 39-60 (AASTSSSSSPSPSTHNDRKKDL) are disordered. [4Fe-4S] cluster is bound by residues Cys128, Cys133, Cys139, Cys159, Cys163, Cys166, and Ser374. The Radical SAM core domain occupies 144–363 (EYATATATIM…EKVGQEMGFI (220 aa)).

The protein belongs to the radical SAM superfamily. Lipoyl synthase family. [4Fe-4S] cluster serves as cofactor.

It localises to the mitochondrion. The enzyme catalyses [[Fe-S] cluster scaffold protein carrying a second [4Fe-4S](2+) cluster] + N(6)-octanoyl-L-lysyl-[protein] + 2 oxidized [2Fe-2S]-[ferredoxin] + 2 S-adenosyl-L-methionine + 4 H(+) = [[Fe-S] cluster scaffold protein] + N(6)-[(R)-dihydrolipoyl]-L-lysyl-[protein] + 4 Fe(3+) + 2 hydrogen sulfide + 2 5'-deoxyadenosine + 2 L-methionine + 2 reduced [2Fe-2S]-[ferredoxin]. It functions in the pathway protein modification; protein lipoylation via endogenous pathway; protein N(6)-(lipoyl)lysine from octanoyl-[acyl-carrier-protein]: step 2/2. In terms of biological role, catalyzes the radical-mediated insertion of two sulfur atoms into the C-6 and C-8 positions of the octanoyl moiety bound to the lipoyl domains of lipoate-dependent enzymes, thereby converting the octanoylated domains into lipoylated derivatives. The polypeptide is Lipoyl synthase, mitochondrial (lias) (Danio rerio (Zebrafish)).